We begin with the raw amino-acid sequence, 178 residues long: uncharacterized protein (178 aa).

Belongs to the mimivirus L114/R131 family.

This is an uncharacterized protein from Acanthamoeba polyphaga mimivirus (APMV).